We begin with the raw amino-acid sequence, 655 residues long: Golgi integral membrane protein 4 (655 aa).

The N-myristoyl glycine moiety is linked to residue glycine 2. The Cytoplasmic portion of the chain corresponds to 2–12; it reads GNGMCSRKQKR. The chain crosses the membrane as a helical; Signal-anchor for type II membrane protein span at residues 13-33; that stretch reads IFQTLLLLTVVFGFLYGAMLY. Residues 34–655 are Lumenal-facing; the sequence is LELQTQLRKA…AEKSHRRAEM (622 aa). Positions 38–107 are golgi targeting; it reads TQLRKAEAVA…ETLNKGRQDS (70 aa). Residues 66-216 are a coiled coil; sequence EHRSRLEKSL…KQLKDTLNRI (151 aa). The interval 80 to 175 is endosome targeting; that stretch reads LEHKKAKEDF…QELSKLKETV (96 aa). The disordered stretch occupies residues 122 to 145; it reads KSQHEELRKQHSDLEEEHRKQGED. Over residues 123–145 the composition is skewed to basic and acidic residues; that stretch reads SQHEELRKQHSDLEEEHRKQGED. A golgi targeting region spans residues 176–220; sequence YNLREENRQLRKAHQDIHTQLQDVKTQVAEYKQLKDTLNRIPSFR. N-linked (GlcNAc...) asparagine glycosylation is present at asparagine 229. Disordered regions lie at residues 256-275 and 285-655; these read QPNH…SSMQ and EQNQ…RAEM. Basic and acidic residues-rich tracts occupy residues 261–270, 290–307, 319–328, and 348–360; these read AGPRRMEEKP, EPRE…RKAL, EHLEEEHDPS, and LDGH…EHST. Serine 328 carries the post-translational modification Phosphoserine. Residues 361–370 are compositionally biased toward polar residues; it reads KAATNFQSPY. Basic and acidic residues predominate over residues 381–398; sequence ARRDEEAQRLREHQEALH. Low complexity-rich tracts occupy residues 399–423 and 433–442; these read QQRL…MAQQ and QQHQEQLRQQ. Residues 468–508 are compositionally biased toward basic and acidic residues; it reads AYDRDNQRQDEAEGDPGNRQELREPGHQEGDPEVEADRAAV. Serine 540 carries the post-translational modification Phosphoserine. A compositionally biased stretch (acidic residues) spans 567–589; sequence QQEDNVDEQYQDEGEEEVQEDLT. Tyrosine 576 carries the phosphotyrosine modification. At threonine 589 the chain carries Phosphothreonine. Residues 590 to 620 show a composition bias toward basic and acidic residues; it reads EEKKREMEHNVEETYGEHPDDKNNDGEEQGV. Tyrosine 633 carries the post-translational modification Phosphotyrosine. Over residues 633–642 the composition is skewed to acidic residues; it reads YEEEEDEEDG.

It belongs to the GOLIM4 family. Post-translationally, phosphorylated by c-AMP-dependent kinases most probably in its lumenal part. O-glycosylated; modified by sialic acid residues. In terms of processing, N-glycosylated; N-glycans are of the complex type and modified by sialic acid residues. Expressed by spermatozoa (at protein level).

The protein localises to the golgi apparatus. The protein resides in the golgi stack membrane. It localises to the endosome membrane. It is found in the membrane. Plays a role in endosome to Golgi protein trafficking; mediates protein transport along the late endosome-bypass pathway from the early endosome to the Golgi. The sequence is that of Golgi integral membrane protein 4 (Golim4) from Mus musculus (Mouse).